The sequence spans 388 residues: Mannitol-1-phosphate 5-dehydrogenase (388 aa).

5 to 16 (AIQFGGGNIGRG) contributes to the NAD(+) binding site. Lys-213 is an active-site residue.

The protein belongs to the mannitol dehydrogenase family. In terms of assembly, monomer.

It catalyses the reaction D-mannitol 1-phosphate + NAD(+) = beta-D-fructose 6-phosphate + NADH + H(+). Its function is as follows. Catalyzes the NAD(H)-dependent interconversion of D-fructose 6-phosphate and D-mannitol 1-phosphate in the mannitol metabolic pathway. The sequence is that of Mannitol-1-phosphate 5-dehydrogenase (mpdA) from Neosartorya fischeri (strain ATCC 1020 / DSM 3700 / CBS 544.65 / FGSC A1164 / JCM 1740 / NRRL 181 / WB 181) (Aspergillus fischerianus).